Consider the following 325-residue polypeptide: Tagatose 1,6-diphosphate aldolase 1 (325 aa).

Belongs to the aldolase LacD family.

The catalysed reaction is D-tagatofuranose 1,6-bisphosphate = D-glyceraldehyde 3-phosphate + dihydroxyacetone phosphate. It functions in the pathway carbohydrate metabolism; D-tagatose 6-phosphate degradation; D-glyceraldehyde 3-phosphate and glycerone phosphate from D-tagatose 6-phosphate: step 2/2. The polypeptide is Tagatose 1,6-diphosphate aldolase 1 (Streptococcus agalactiae serotype III (strain NEM316)).